The primary structure comprises 153 residues: MKTFVLHIFIFALVAFASASRDSAKKIGSQYDNYETCLTEHGLTDDDIFSIGEVSSGQHKTNHEDTELHKNGCVLQCMLEKDGLMSGADYDEEKMREDYIKETGTEPGDQRIEALNACMQETKDMEDKCDKSLLLVACVLAAEAVLADSNEGA.

Residues 1–19 (MKTFVLHIFIFALVAFASA) form the signal peptide. 3 cysteine pairs are disulfide-bonded: cysteine 37-cysteine 77, cysteine 73-cysteine 129, and cysteine 118-cysteine 138.

It belongs to the PBP/GOBP family. In terms of assembly, homodimer.

It localises to the secreted. In terms of biological role, colony queen number, a major feature of social organization, is associated with worker genotype for Gp-9. Colonies are headed by either a single reproductive queen (monogyne form) or multiple queens (polygyne form). Differences in worker Gp-9 genotypes between social forms may cause differences in workers' abilities to recognize queens and regulate their numbers. This Solenopsis interrupta (Fire ant) protein is Pheromone-binding protein Gp-9.